We begin with the raw amino-acid sequence, 132 residues long: Small ribosomal subunit protein uS8 (132 aa).

It belongs to the universal ribosomal protein uS8 family. As to quaternary structure, part of the 30S ribosomal subunit. Contacts proteins S5 and S12.

Its function is as follows. One of the primary rRNA binding proteins, it binds directly to 16S rRNA central domain where it helps coordinate assembly of the platform of the 30S subunit. This is Small ribosomal subunit protein uS8 from Anaplasma marginale (strain Florida).